The chain runs to 198 residues: Coagulation factor XIII A chain (198 aa).

The segment at 1-36 is disordered; the sequence is MSESSGTAFGGRRAIPPNTSNAAENDPPTVELQGLV. S2 carries the N-acetylserine modification. Residues 2-38 constitute a propeptide, activation peptide; it reads SESSGTAFGGRRAIPPNTSNAAENDPPTVELQGLVPR.

The protein belongs to the transglutaminase superfamily. Transglutaminase family. Tetramer of two A chains (F13A1) and two B (F13B) chains. Ca(2+) serves as cofactor. Post-translationally, the activation peptide is released by thrombin.

Its subcellular location is the cytoplasm. The protein resides in the secreted. It carries out the reaction L-glutaminyl-[protein] + L-lysyl-[protein] = [protein]-L-lysyl-N(6)-5-L-glutamyl-[protein] + NH4(+). Factor XIII is activated by thrombin and calcium ion to a transglutaminase that catalyzes the formation of gamma-glutamyl-epsilon-lysine cross-links between fibrin chains, thus stabilizing the fibrin clot. Also cross-link alpha-2-plasmin inhibitor, or fibronectin, to the alpha chains of fibrin. This chain is Coagulation factor XIII A chain (F13A1), found in Bos taurus (Bovine).